We begin with the raw amino-acid sequence, 407 residues long: Imidazolonepropionase (407 aa).

His-68 and His-70 together coordinate Fe(3+). Residues His-68 and His-70 each contribute to the Zn(2+) site. Arg-77, Tyr-140, and His-173 together coordinate 4-imidazolone-5-propanoate. Tyr-140 contributes to the N-formimidoyl-L-glutamate binding site. Position 238 (His-238) interacts with Fe(3+). A Zn(2+)-binding site is contributed by His-238. Gln-241 is a 4-imidazolone-5-propanoate binding site. A Fe(3+)-binding site is contributed by Asp-313. Residue Asp-313 coordinates Zn(2+). N-formimidoyl-L-glutamate is bound by residues Asn-315 and Gly-317. Residue Thr-318 participates in 4-imidazolone-5-propanoate binding.

Belongs to the metallo-dependent hydrolases superfamily. HutI family. Requires Zn(2+) as cofactor. It depends on Fe(3+) as a cofactor.

It localises to the cytoplasm. It catalyses the reaction 4-imidazolone-5-propanoate + H2O = N-formimidoyl-L-glutamate. Its pathway is amino-acid degradation; L-histidine degradation into L-glutamate; N-formimidoyl-L-glutamate from L-histidine: step 3/3. Its function is as follows. Catalyzes the hydrolytic cleavage of the carbon-nitrogen bond in imidazolone-5-propanoate to yield N-formimidoyl-L-glutamate. It is the third step in the universal histidine degradation pathway. The protein is Imidazolonepropionase of Burkholderia cenocepacia (strain ATCC BAA-245 / DSM 16553 / LMG 16656 / NCTC 13227 / J2315 / CF5610) (Burkholderia cepacia (strain J2315)).